A 179-amino-acid polypeptide reads, in one-letter code: Large ribosomal subunit protein uL5 (179 aa).

This sequence belongs to the universal ribosomal protein uL5 family. As to quaternary structure, part of the 50S ribosomal subunit; part of the 5S rRNA/L5/L18/L25 subcomplex. Contacts the 5S rRNA and the P site tRNA. Forms a bridge to the 30S subunit in the 70S ribosome.

Functionally, this is one of the proteins that bind and probably mediate the attachment of the 5S RNA into the large ribosomal subunit, where it forms part of the central protuberance. In the 70S ribosome it contacts protein S13 of the 30S subunit (bridge B1b), connecting the 2 subunits; this bridge is implicated in subunit movement. Contacts the P site tRNA; the 5S rRNA and some of its associated proteins might help stabilize positioning of ribosome-bound tRNAs. In Solidesulfovibrio magneticus (strain ATCC 700980 / DSM 13731 / RS-1) (Desulfovibrio magneticus), this protein is Large ribosomal subunit protein uL5.